Reading from the N-terminus, the 63-residue chain is Large ribosomal subunit protein bL28 (63 aa).

The protein belongs to the bacterial ribosomal protein bL28 family.

This Desulfosudis oleivorans (strain DSM 6200 / JCM 39069 / Hxd3) (Desulfococcus oleovorans) protein is Large ribosomal subunit protein bL28.